We begin with the raw amino-acid sequence, 151 residues long: Deazaflavin-dependent nitroreductase (151 aa).

Coenzyme F420-(gamma-Glu)n contacts are provided by residues 54–56 (RKT), 60–65 (RVNPLY), 76–79 (AASK), 87–91 (MWYLN), and Y133.

It belongs to the F420H(2)-dependent quinone reductase family.

Its subcellular location is the cell membrane. The enzyme catalyses oxidized coenzyme F420-(gamma-L-Glu)(n) + a quinol + H(+) = reduced coenzyme F420-(gamma-L-Glu)(n) + a quinone. In terms of biological role, involved in a F420-dependent anti-oxidant mechanism that protects M.tuberculosis against oxidative stress and bactericidal agents. Catalyzes the F420H(2)-dependent two-electron reduction of quinones to dihydroquinones, thereby preventing the formation of cytotoxic semiquinones obtained by the one-electron reduction pathway. In vitro, catalyzes the reduction of both benzoquinone and naphthoquinone analogs; since menaquinone is the sole quinone electron carrier in the respiratory chain in M.tuberculosis, the physiological electron acceptor for Fqr-mediated F420H(2) oxidation is therefore likely to be the endogenous menaquinone found in the membrane fraction of M.tuberculosis. Is able to use F420 species with two and five glutamate residues in its polyglutamate tail. Cannot use NADH or NADPH instead of F420H(2) as the electron donor. Is involved in the bioreductive activation of bicyclic 4-nitroimidazole prodrugs such as PA-824 and delamanid developed for anti-tuberculosis therapy against both replicating and persistent bacteria. It converts PA-824 into three primary metabolites resulting from reduction of the imidazole ring at C-3; the major one is the corresponding des-nitroimidazole that generates lethal reactive nitrogen species, including nitric oxide (NO), which appears to be responsible for the anaerobic killing activity. Ddn uses the reduced F420 produced by FGD1 to activate PA-824. Delamanid (OPC-67683) is also reduced by Ddn to its des-nitro form. This Mycobacterium tuberculosis (strain CDC 1551 / Oshkosh) protein is Deazaflavin-dependent nitroreductase (ddn).